A 93-amino-acid polypeptide reads, in one-letter code: Protein salt-induced and EIN3/EIL1-dependent 1 (93 aa).

Residues 23–36 (SSLLTESSSSSLCS) show a composition bias toward low complexity. The disordered stretch occupies residues 23-46 (SSLLTESSSSSLCSEEAEGGGGEA).

Triggered by EIN3. Functionally, involved in ethylene-dependent salt stress responses by reducing reactive oxygen species (ROS) accumulation. The chain is Protein salt-induced and EIN3/EIL1-dependent 1 from Arabidopsis thaliana (Mouse-ear cress).